The primary structure comprises 217 residues: Octanoyltransferase (217 aa).

Positions 32–207 (SESHDELWIV…TFSQLLGYQH (176 aa)) constitute a BPL/LPL catalytic domain. Substrate-binding positions include 71 to 78 (RGGQVTYH), 138 to 140 (SLG), and 151 to 153 (GLA). C169 functions as the Acyl-thioester intermediate in the catalytic mechanism.

It belongs to the LipB family.

It localises to the cytoplasm. It catalyses the reaction octanoyl-[ACP] + L-lysyl-[protein] = N(6)-octanoyl-L-lysyl-[protein] + holo-[ACP] + H(+). It functions in the pathway protein modification; protein lipoylation via endogenous pathway; protein N(6)-(lipoyl)lysine from octanoyl-[acyl-carrier-protein]: step 1/2. Its function is as follows. Catalyzes the transfer of endogenously produced octanoic acid from octanoyl-acyl-carrier-protein onto the lipoyl domains of lipoate-dependent enzymes. Lipoyl-ACP can also act as a substrate although octanoyl-ACP is likely to be the physiological substrate. This chain is Octanoyltransferase, found in Shewanella baltica (strain OS223).